Here is a 1998-residue protein sequence, read N- to C-terminus: Histone acetyltransferase KAT6A (1998 aa).

In terms of domain architecture, SAMD1-like winged helix (WH) spans 1-77 (MVKLANPLYT…LNSYKDPDNP (77 aa)). The required for activation of RUNX1-1 stretch occupies residues 1 to 144 (MVKLANPLYT…CGGTAASGFH (144 aa)). The tract at residues 52-166 (ELSVKDGTIL…HGRLLKDGPL (115 aa)) is required for nuclear localization. Residues 72-93 (KDPDNPGRIALPKPRNHGKLDN) form a disordered region. Positions 95-171 (QSVDWNKLLK…KDGPLYRLNT (77 aa)) constitute an H15 domain. The interval 144 to 662 (HQQLRLAIKR…RKGYGRFLID (519 aa)) is interaction with PML. Lysine 172 bears the N6-acetyllysine mark. 2 PHD-type zinc fingers span residues 199-258 (DKPV…LRWQ) and 255-306 (LRWQ…GMWI). The segment at 312–662 (PRKKGRKLLQ…RKGYGRFLID (351 aa)) is interaction with RUNX1-1. Residues 336-377 (GRPKNRLKKQSTVSKGPFSKVRTGPGRGRKRKITVSSQSASS) form a disordered region. N6-acetyllysine is present on residues lysine 350 and lysine 355. Threonine 369 carries the phosphothreonine; by PKB/AKT1 modification. Serine 419 is subject to Phosphoserine. The disordered stretch occupies residues 440–464 (KGNRKSSTSHWPTDNQDGWESKQES). Over residues 444 to 457 (KSSTSHWPTDNQDG) the composition is skewed to polar residues. A Phosphoserine modification is found at serine 471. The tract at residues 486-776 (IQEQALQKVG…VDPECLRWTP (291 aa)) is catalytic. An MYST-type HAT domain is found at 502-776 (PQVRCPSVIE…VDPECLRWTP (275 aa)). A mediates interaction with BRPF1, required for histone H3 acetyltransferase activity region spans residues 505-808 (RCPSVIEFGK…EPQGQERELE (304 aa)). The C2HC MYST-type zinc-finger motif lies at 535-560 (LYLCEFCLKYMKSRTILQQHMKKCGW). Residue lysine 602 is modified to N6-acetyllysine; by autocatalysis. Residues 643–647 (SCIMI) and 652–658 (QRKGYGR) contribute to the acetyl-CoA site. Glutamate 678 acts as the Proton donor/acceptor in catalysis. Serine 682 is a binding site for acetyl-CoA. The interval 783–947 (VVSEEEDEEA…RFSESADLWR (165 aa)) is disordered. Position 785 is a phosphoserine (serine 785). Residues 785–797 (SEEEDEEADDGEK) show a composition bias toward acidic residues. Residues 798-840 (EEPQGQERELETRERVGKSVSRENKDQDSSSLIESEKKPEVKE) are compositionally biased toward basic and acidic residues. Lysine 815 carries the post-translational modification N6-acetyllysine. A Glycyl lysine isopeptide (Lys-Gly) (interchain with G-Cter in SUMO2) cross-link involves residue lysine 835. Residues 865-874 (RRGRCGRKNR) show a composition bias toward basic residues. A compositionally biased stretch (basic and acidic residues) spans 875-886 (KTQERFGDKDSK). Residue tyrosine 900 is modified to Phosphotyrosine. Positions 903-916 (CEEKSAASRERYTE) are enriched in basic and acidic residues. A phosphoserine mark is found at serine 940 and serine 953. A disordered region spans residues 982–1079 (GFSESSEEEE…EEEEDENELF (98 aa)). Lysine 1006 carries the post-translational modification N6-acetyllysine. Positions 1008–1029 (TLKRKKPILHRRRRVRKRKHHN) are enriched in basic residues. A compositionally biased stretch (low complexity) spans 1030–1041 (SSVVTETISETT). 2 stretches are compositionally biased toward acidic residues: residues 1042-1052 (EVLDEPFEDSD) and 1064-1077 (FEIE…DENE). 3 positions are modified to phosphoserine: serine 1088, serine 1089, and serine 1114. Disordered regions lie at residues 1096-1175 (QASS…PGFK), 1195-1436 (PIKP…EGAY), 1450-1567 (QSYT…STMG), and 1630-1702 (TCVV…CSMN). Over residues 1106 to 1119 (DEEEEEEESDDADD) the composition is skewed to acidic residues. Polar residues predominate over residues 1135 to 1146 (NSASLEPDTSTP). Residues 1147 to 1173 (MKKKKGWPKGKSRKPIHWKKRPGRKPG) are compositionally biased toward basic residues. A compositionally biased stretch (basic and acidic residues) spans 1203 to 1228 (RTQESEELVEVKEGLVEERKEEMHTE). 2 stretches are compositionally biased toward acidic residues: residues 1229–1240 (ADEEAEEEEDAA) and 1281–1298 (EEPQ…DEVT). 3 stretches are compositionally biased toward basic and acidic residues: residues 1316–1333 (HLDS…ARED), 1351–1360 (DSRENAKDKD), and 1392–1413 (DSNT…HSEL). The span at 1472 to 1496 (HNSPISSIPSHPSQSVRSVSSPSMP) shows a compositional bias: low complexity. Positions 1501-1522 (GYTQISPEQGSLSAPSMQNMET) are enriched in polar residues. Residues 1510-1635 (GSLSAPSMQN…KSPQTCVVER (126 aa)) form an interaction with RUNX1-2 region. An interaction with PML region spans residues 1510–1735 (GSLSAPSMQN…YERIPGDFGA (226 aa)). Low complexity predominate over residues 1527–1541 (DVPSVSDHSQQVVDS). The span at 1549 to 1567 (IESTTENYENPSSYDSTMG) shows a compositional bias: polar residues. Composition is skewed to pro residues over residues 1639 to 1658 (NQQP…PQPQ) and 1665 to 1693 (PQPP…PQQQ). A required for activation of RUNX1-2 region spans residues 1907–1942 (SMNMNTLNAMNSYRMTQPMMNSSYHSNPAYMNQTAQ).

Belongs to the MYST (SAS/MOZ) family. Component of the MOZ/MORF complex composed at least of ING5, KAT6A, KAT6B, MEAF6 and one of BRPF1, BRD1/BRPF2 and BRPF3. Interacts with RUNX1; phosphorylation of RUNX1 enhances the interaction. Interacts with RUNX2. Interacts with p53/TP53. Interacts with PML and this interaction positively regulates its acetylation activity towards p53/TP53. Post-translationally, autoacetylated. Autoacetylation at Lys-602 is required for proper function. In terms of processing, phosphorylation at Thr-369 by PKB/AKT1 inhibits its interaction with PML and negatively regulates its acetylation activity towards p53/TP53.

The protein resides in the nucleus. The protein localises to the nucleolus. It localises to the nucleoplasm. It is found in the PML body. The enzyme catalyses L-lysyl-[protein] + acetyl-CoA = N(6)-acetyl-L-lysyl-[protein] + CoA + H(+). Histone acetyltransferase that acetylates lysine residues in histone H3 and histone H4 (in vitro). Component of the MOZ/MORF complex which has a histone H3 acetyltransferase activity. May act as a transcriptional coactivator for RUNX1 and RUNX2. Acetylates p53/TP53 at 'Lys-120' and 'Lys-382' and controls its transcriptional activity via association with PML. The protein is Histone acetyltransferase KAT6A (Kat6a) of Rattus norvegicus (Rat).